The primary structure comprises 59 residues: U-reduvitoxin-Pr6a (59 aa).

Residues 1–19 form the signal peptide; sequence MKVFLLTILLCFLIAYCAG. Intrachain disulfides connect Cys31-Cys46, Cys38-Cys51, and Cys45-Cys58.

It belongs to the venom Ptu1-like knottin family. As to expression, expressed by the venom gland.

The protein localises to the secreted. In terms of biological role, binds reversibly and blocks P/Q-type voltage-gated calcium channels (Cav). The sequence is that of U-reduvitoxin-Pr6a from Platymeris rhadamanthus (Red spot assassin bug).